The chain runs to 167 residues: Urease accessory protein UreE (167 aa).

The segment at 135–167 (SGAYGGGHHHSHSHHEGDEFHSKPRLHHFGGSQ) is disordered. The span at 157 to 167 (KPRLHHFGGSQ) shows a compositional bias: basic residues.

Belongs to the UreE family.

The protein resides in the cytoplasm. Its function is as follows. Involved in urease metallocenter assembly. Binds nickel. Probably functions as a nickel donor during metallocenter assembly. This is Urease accessory protein UreE from Nitrosococcus oceani (strain ATCC 19707 / BCRC 17464 / JCM 30415 / NCIMB 11848 / C-107).